Reading from the N-terminus, the 158-residue chain is Peptide methionine sulfoxide reductase MsrA (158 aa).

Residue Cys10 is part of the active site.

It belongs to the MsrA Met sulfoxide reductase family.

The catalysed reaction is L-methionyl-[protein] + [thioredoxin]-disulfide + H2O = L-methionyl-(S)-S-oxide-[protein] + [thioredoxin]-dithiol. The enzyme catalyses [thioredoxin]-disulfide + L-methionine + H2O = L-methionine (S)-S-oxide + [thioredoxin]-dithiol. In terms of biological role, has an important function as a repair enzyme for proteins that have been inactivated by oxidation. Catalyzes the reversible oxidation-reduction of methionine sulfoxide in proteins to methionine. This Alkaliphilus metalliredigens (strain QYMF) protein is Peptide methionine sulfoxide reductase MsrA.